Consider the following 381-residue polypeptide: 1-deoxy-D-xylulose 5-phosphate reductoisomerase (381 aa).

The NADPH site is built by Ser10, Gly11, Ser12, Ile13, Gly36, Lys37, Asn38, and Asn121. Lys122 provides a ligand contact to 1-deoxy-D-xylulose 5-phosphate. Glu123 contacts NADPH. Asp147 is a Mn(2+) binding site. 1-deoxy-D-xylulose 5-phosphate is bound by residues Ser148, Glu149, Ser173, and His196. Glu149 lines the Mn(2+) pocket. Gly202 contacts NADPH. The 1-deoxy-D-xylulose 5-phosphate site is built by Ser209, Asn214, Lys215, and Glu218. Glu218 contributes to the Mn(2+) binding site.

The protein belongs to the DXR family. Mg(2+) is required as a cofactor. It depends on Mn(2+) as a cofactor.

It carries out the reaction 2-C-methyl-D-erythritol 4-phosphate + NADP(+) = 1-deoxy-D-xylulose 5-phosphate + NADPH + H(+). It participates in isoprenoid biosynthesis; isopentenyl diphosphate biosynthesis via DXP pathway; isopentenyl diphosphate from 1-deoxy-D-xylulose 5-phosphate: step 1/6. Catalyzes the NADPH-dependent rearrangement and reduction of 1-deoxy-D-xylulose-5-phosphate (DXP) to 2-C-methyl-D-erythritol 4-phosphate (MEP). This is 1-deoxy-D-xylulose 5-phosphate reductoisomerase from Geobacillus sp. (strain WCH70).